The following is a 141-amino-acid chain: Nucleoside diphosphate kinase (141 aa).

ATP contacts are provided by Lys11, Phe59, Arg87, Thr93, Arg104, and Asn114. The active-site Pros-phosphohistidine intermediate is the His117.

Belongs to the NDK family. Homotetramer. Mg(2+) serves as cofactor.

The protein localises to the cytoplasm. It carries out the reaction a 2'-deoxyribonucleoside 5'-diphosphate + ATP = a 2'-deoxyribonucleoside 5'-triphosphate + ADP. The catalysed reaction is a ribonucleoside 5'-diphosphate + ATP = a ribonucleoside 5'-triphosphate + ADP. Major role in the synthesis of nucleoside triphosphates other than ATP. The ATP gamma phosphate is transferred to the NDP beta phosphate via a ping-pong mechanism, using a phosphorylated active-site intermediate. The polypeptide is Nucleoside diphosphate kinase (Albidiferax ferrireducens (strain ATCC BAA-621 / DSM 15236 / T118) (Rhodoferax ferrireducens)).